The following is a 457-amino-acid chain: Methanethiol oxidase (457 aa).

This sequence belongs to the selenium-binding protein family.

It is found in the nucleus. Its subcellular location is the cytoplasm. The protein resides in the cytosol. The protein localises to the membrane. It catalyses the reaction methanethiol + O2 + H2O = hydrogen sulfide + formaldehyde + H2O2 + H(+). It functions in the pathway organosulfur degradation. In terms of biological role, catalyzes the oxidation of methanethiol, an organosulfur compound known to be produced in substantial amounts by gut bacteria. Selenium-binding protein which may be involved in the sensing of reactive xenobiotics in the cytoplasm. May be involved in intra-Golgi protein transport. This Danio rerio (Zebrafish) protein is Methanethiol oxidase (selenbp1).